We begin with the raw amino-acid sequence, 986 residues long: E3 ubiquitin-protein ligase Arkadia (986 aa).

Residues Lys19, Lys28, Lys34, Lys47, Lys59, Lys73, Lys87, Lys96, and Lys110 each participate in a glycyl lysine isopeptide (Lys-Gly) (interchain with G-Cter in SUMO2) cross-link. A compositionally biased stretch (basic and acidic residues) spans 66–89 (HLCDDSQKQEKDMNGNQQEQEKSL). The interval 66-106 (HLCDDSQKQEKDMNGNQQEQEKSLVVRKKRKSQQAGPSYVQ) is disordered. The disordered stretch occupies residues 120–191 (QHLGTPSDED…HKWPRTETES (72 aa)). The segment covering 132-151 (SSFSDCLSSPSSSLHFGDSD) has biased composition (low complexity). The span at 164–173 (RHSQTILNAK) shows a compositional bias: polar residues. A Glycyl lysine isopeptide (Lys-Gly) (interchain with G-Cter in SUMO2) cross-link involves residue Lys173. Positions 174-184 (SRSHSARSHKW) are enriched in basic residues. Residues Lys198 and Lys218 each participate in a glycyl lysine isopeptide (Lys-Gly) (interchain with G-Cter in SUMO2) cross-link. The segment at 241–404 (VLARRKYALL…VPTTSARMES (164 aa)) is interaction with AXIN1. Positions 248-277 (ALLPSSSSSSENDLSSESSSSSSTEGEEDL) are disordered. Residues 252–271 (SSSSSSENDLSSESSSSSST) are compositionally biased toward low complexity. Residues 300–304 (VVVIE) carry the SUMO interaction motif 1 (SIM) motif. Positions 325–331 (EVEIVTV) match the SUMO interaction motif 2 (SIM) motif. The tract at residues 337–373 (SRSTLGHSRSHWSQGSSSHASRPQEPRNRSRISTVIQ) is disordered. Residues 347–357 (HWSQGSSSHAS) are compositionally biased toward low complexity. Residues 382 to 386 (VVDLT) carry the SUMO interaction motif 3 (SIM) motif. Disordered stretches follow at residues 389 to 471 (EDEP…ETGP), 506 to 561 (QQHG…SYHE), 610 to 646 (APSQ…RHYM), 659 to 684 (HQAS…VDYV), and 696 to 719 (ISSH…TAAP). Residues 395-466 (VPTTSARMES…DSRRTTSSAV (72 aa)) show a composition bias toward polar residues. Residues 508-522 (HGHHFQHHHHHHHTP) show a composition bias toward basic residues. The segment covering 551–561 (ANSSSGTSYHE) has biased composition (polar residues). Pro residues predominate over residues 670–680 (NPPPQTQPPPQ). The ubiquitin binding stretch occupies residues 907-909 (YPH). Glycyl lysine isopeptide (Lys-Gly) (interchain with G-Cter in SUMO2) cross-links involve residues Lys915 and Lys919. 2 residues coordinate Zn(2+): Cys934 and Cys937. Residues 934–975 (CTICLSILEEGEDVRRLPCMHLFHQVCVDQWLITNKKCPICR) form an RING-type; atypical zinc finger. Residues 949 to 953 (RLPCM) form a ubiquitin binding region. The Zn(2+) site is built by His957 and Cys960.

The protein belongs to the Arkadia family. Monomer. Interacts with SMAD6, SMAD7, AXIN1, AXIN2 and SKIL isoform SNON. Interacts with (phosphorylated) SMAD2 and SMAD3. Part of a complex containing RNF111, AXIN1 and SMAD7. Interacts (via SIM domains) with SUMO1 and SUMO2.

It localises to the nucleus. The protein resides in the cytoplasm. It is found in the PML body. It catalyses the reaction S-ubiquitinyl-[E2 ubiquitin-conjugating enzyme]-L-cysteine + [acceptor protein]-L-lysine = [E2 ubiquitin-conjugating enzyme]-L-cysteine + N(6)-ubiquitinyl-[acceptor protein]-L-lysine.. It participates in protein modification; protein ubiquitination. Its activity is regulated as follows. Binds free ubiquitin non-covalently via its RING-type zinc finger. Ubiquitin-binding leads to enhance the E3 ubiquitin-protein ligase activity by stabilizing the ubiquitin-conjugating enzyme E2 (donor ubiquitin) in the 'closed' conformation and activating ubiquitin transfer. Functionally, E3 ubiquitin-protein ligase. Required for mesoderm patterning during embryonic development. Acts as an enhancer of the transcriptional responses of the SMAD2/SMAD3 effectors, which are activated downstream of BMP. Acts by mediating ubiquitination and degradation of SMAD inhibitors such as SMAD7, inducing their proteasomal degradation and thereby enhancing the transcriptional activity of TGF-beta and BMP. In addition to enhance transcription of SMAD2/SMAD3 effectors, also regulates their turnover by mediating their ubiquitination and subsequent degradation, coupling their activation with degradation, thereby ensuring that only effectors 'in use' are degraded. Activates SMAD3/SMAD4-dependent transcription by triggering signal-induced degradation of SNON isoform of SKIL. Associates with UBE2D2 as an E2 enzyme. Specifically binds polysumoylated chains via SUMO interaction motifs (SIMs) and mediates ubiquitination of sumoylated substrates. Catalyzes 'Lys-63'-linked ubiquitination of sumoylated XPC in response to UV irradiation, promoting nucleotide excision repair. Mediates ubiquitination and degradation of sumoylated PML. The regulation of the BMP-SMAD signaling is however independent of sumoylation and is not dependent of SUMO interaction motifs (SIMs). This chain is E3 ubiquitin-protein ligase Arkadia (RNF111), found in Pongo abelii (Sumatran orangutan).